Consider the following 143-residue polypeptide: uncharacterized protein (143 aa).

Residues 35 to 59 (ITKDRGDRDDGRYGEPRIQRKPGQL) form a disordered region. Residues 36 to 52 (TKDRGDRDDGRYGEPRI) show a composition bias toward basic and acidic residues.

This is an uncharacterized protein from Streptomyces fradiae (Streptomyces roseoflavus).